A 354-amino-acid polypeptide reads, in one-letter code: Biotin synthase (354 aa).

The Radical SAM core domain occupies 41 to 265 (NEVQISRLLS…LMPHSRVRLS (225 aa)). The [4Fe-4S] cluster site is built by Cys56, Cys60, and Cys63. The [2Fe-2S] cluster site is built by Cys100, Cys131, Cys191, and Arg263.

It belongs to the radical SAM superfamily. Biotin synthase family. In terms of assembly, homodimer. The cofactor is [4Fe-4S] cluster. [2Fe-2S] cluster serves as cofactor.

The enzyme catalyses (4R,5S)-dethiobiotin + (sulfur carrier)-SH + 2 reduced [2Fe-2S]-[ferredoxin] + 2 S-adenosyl-L-methionine = (sulfur carrier)-H + biotin + 2 5'-deoxyadenosine + 2 L-methionine + 2 oxidized [2Fe-2S]-[ferredoxin]. It functions in the pathway cofactor biosynthesis; biotin biosynthesis; biotin from 7,8-diaminononanoate: step 2/2. Its function is as follows. Catalyzes the conversion of dethiobiotin (DTB) to biotin by the insertion of a sulfur atom into dethiobiotin via a radical-based mechanism. This is Biotin synthase from Shewanella woodyi (strain ATCC 51908 / MS32).